The following is a 127-amino-acid chain: Large ribosomal subunit protein bL17 (127 aa).

This sequence belongs to the bacterial ribosomal protein bL17 family. Part of the 50S ribosomal subunit. Contacts protein L32.

The chain is Large ribosomal subunit protein bL17 from Photobacterium profundum (strain SS9).